Here is a 360-residue protein sequence, read N- to C-terminus: Peptide chain release factor 1 (360 aa).

Glutamine 235 is subject to N5-methylglutamine. The span at 281–307 (ERQRADSERSADRRNQVGSGDRSERIR) shows a compositional bias: basic and acidic residues. Positions 281–310 (ERQRADSERSADRRNQVGSGDRSERIRTYN) are disordered.

It belongs to the prokaryotic/mitochondrial release factor family. Methylated by PrmC. Methylation increases the termination efficiency of RF1.

It localises to the cytoplasm. Its function is as follows. Peptide chain release factor 1 directs the termination of translation in response to the peptide chain termination codons UAG and UAA. The polypeptide is Peptide chain release factor 1 (Sinorhizobium medicae (strain WSM419) (Ensifer medicae)).